The following is a 468-amino-acid chain: 3-isopropylmalate dehydratase large subunit (468 aa).

Positions 347, 407, and 410 each coordinate [4Fe-4S] cluster.

Belongs to the aconitase/IPM isomerase family. LeuC type 1 subfamily. Heterodimer of LeuC and LeuD. It depends on [4Fe-4S] cluster as a cofactor.

The enzyme catalyses (2R,3S)-3-isopropylmalate = (2S)-2-isopropylmalate. The protein operates within amino-acid biosynthesis; L-leucine biosynthesis; L-leucine from 3-methyl-2-oxobutanoate: step 2/4. Its function is as follows. Catalyzes the isomerization between 2-isopropylmalate and 3-isopropylmalate, via the formation of 2-isopropylmaleate. This is 3-isopropylmalate dehydratase large subunit from Prochlorococcus marinus (strain AS9601).